A 301-amino-acid chain; its full sequence is G-protein coupled receptor homolog U51 (301 aa).

Topologically, residues 1 to 15 (MEKETKSLAWPATAE) are extracellular. The chain crosses the membrane as a helical span at residues 16–36 (FYGWVFIFSSIQLCTVVFLTV). Residues 37–48 (RFNGFKVGREYA) are Cytoplasmic-facing. Residues 49 to 69 (VFTFAGMSFNCFLLPIKMGLL) form a helical membrane-spanning segment. Topologically, residues 70-82 (SGHWTLPRDFCAI) are extracellular. The helical transmembrane segment at 83-103 (LLYIDDFSAYFSSWSLVFMAI) threads the bilayer. Over 104–122 (ERINYFCYSTPLLNENSKA) the chain is Cytoplasmic. A helical transmembrane segment spans residues 123–143 (LAKVCFPIVWVVSGVQALQML). Over 144 to 168 (NNYKATALQNETGQCFLAFLRSGHD) the chain is Extracellular. Residue N153 is glycosylated (N-linked (GlcNAc...) asparagine; by host). A helical transmembrane segment spans residues 169-189 (MWLMLVYSVVIPVMLVFFYLY). Over 190–199 (SKNFMLLKDE) the chain is Cytoplasmic. Residues 200 to 220 (LSSVTTYLCIYLLLGTIAHLP) traverse the membrane as a helical segment. The Extracellular segment spans residues 221–238 (KAALSEIESDKIFYGLRD). The helical transmembrane segment at 239-259 (IFMALPVLKVYYISAMAYCMA) threads the bilayer. At 260–301 (CDDHTVPVRLCSIWLVNLCKKCFSCTRREKGSDLEVGIKMLK) the chain is on the cytoplasmic side.

The protein belongs to the G-protein coupled receptor 1 family.

It is found in the host cell membrane. The sequence is that of G-protein coupled receptor homolog U51 (U51) from Homo sapiens (Human).